A 387-amino-acid chain; its full sequence is Ferrochelatase (387 aa).

The Fe cation site is built by His-196 and Glu-277.

This sequence belongs to the ferrochelatase family.

It localises to the cytoplasm. The enzyme catalyses heme b + 2 H(+) = protoporphyrin IX + Fe(2+). Its pathway is porphyrin-containing compound metabolism; protoheme biosynthesis; protoheme from protoporphyrin-IX: step 1/1. Catalyzes the ferrous insertion into protoporphyrin IX. The chain is Ferrochelatase from Synechococcus sp. (strain RCC307).